A 148-amino-acid polypeptide reads, in one-letter code: Deoxyuridine 5'-triphosphate nucleotidohydrolase (148 aa).

Residues 67–69, N80, 84–86, and M94 contribute to the substrate site; these read RSG and LID.

It belongs to the dUTPase family. Requires Mg(2+) as cofactor.

It catalyses the reaction dUTP + H2O = dUMP + diphosphate + H(+). It participates in pyrimidine metabolism; dUMP biosynthesis; dUMP from dCTP (dUTP route): step 2/2. This enzyme is involved in nucleotide metabolism: it produces dUMP, the immediate precursor of thymidine nucleotides and it decreases the intracellular concentration of dUTP so that uracil cannot be incorporated into DNA. This chain is Deoxyuridine 5'-triphosphate nucleotidohydrolase, found in Burkholderia ambifaria (strain MC40-6).